The following is a 373-amino-acid chain: 1-deoxy-D-xylulose 5-phosphate reductoisomerase (373 aa).

NADPH contacts are provided by Thr-10, Gly-11, Ser-12, Ile-13, Arg-37, and Asn-112. Lys-113 is a binding site for 1-deoxy-D-xylulose 5-phosphate. Position 114 (Glu-114) interacts with NADPH. Residue Asp-134 coordinates Mn(2+). Residues Ser-135, Glu-136, Ser-160, and His-183 each coordinate 1-deoxy-D-xylulose 5-phosphate. Glu-136 serves as a coordination point for Mn(2+). Gly-189 is an NADPH binding site. The 1-deoxy-D-xylulose 5-phosphate site is built by Ser-196, Asn-201, Lys-202, and Glu-205. Residue Glu-205 participates in Mn(2+) binding.

This sequence belongs to the DXR family. Mg(2+) is required as a cofactor. Mn(2+) serves as cofactor.

The catalysed reaction is 2-C-methyl-D-erythritol 4-phosphate + NADP(+) = 1-deoxy-D-xylulose 5-phosphate + NADPH + H(+). Its pathway is isoprenoid biosynthesis; isopentenyl diphosphate biosynthesis via DXP pathway; isopentenyl diphosphate from 1-deoxy-D-xylulose 5-phosphate: step 1/6. Functionally, catalyzes the NADPH-dependent rearrangement and reduction of 1-deoxy-D-xylulose-5-phosphate (DXP) to 2-C-methyl-D-erythritol 4-phosphate (MEP). This is 1-deoxy-D-xylulose 5-phosphate reductoisomerase from Persephonella marina (strain DSM 14350 / EX-H1).